The sequence spans 219 residues: Probable nicotinate-nucleotide adenylyltransferase (219 aa).

Belongs to the NadD family.

The enzyme catalyses nicotinate beta-D-ribonucleotide + ATP + H(+) = deamido-NAD(+) + diphosphate. Its pathway is cofactor biosynthesis; NAD(+) biosynthesis; deamido-NAD(+) from nicotinate D-ribonucleotide: step 1/1. Catalyzes the reversible adenylation of nicotinate mononucleotide (NaMN) to nicotinic acid adenine dinucleotide (NaAD). This is Probable nicotinate-nucleotide adenylyltransferase from Cronobacter sakazakii (strain ATCC BAA-894) (Enterobacter sakazakii).